Here is a 309-residue protein sequence, read N- to C-terminus: Calcium homeostasis modulator protein 5 (309 aa).

Residues 1 to 15 (MDAFQSILKFFLNQK) lie on the Cytoplasmic side of the membrane. A helical membrane pass occupies residues 16–37 (TAIGYSFMALLTVGSERLFSLV). R32 and V37 together coordinate a 1,2-diacyl-sn-glycero-3-phosphate. At 38–45 (AFKCPCSI) the chain is on the extracellular side. 3 cysteine pairs are disulfide-bonded: C41–C127, C43–C158, and C142–C149. A helical membrane pass occupies residues 46-70 (ENTAYGLVFLFAPAWVLLILGFFLN). The Cytoplasmic segment spans residues 71 to 99 (NKAWRLFTGCCMNPQKIFPRRRCCRFFYV). A helical membrane pass occupies residues 100–129 (LGHITLSSLVAPVMWLSVALLNGTFYECAM). N121 is an a 1,2-diacyl-sn-glycero-3-phosphate binding site. At 130–174 (SGTRSTRLLEMICKGKPKECWEELHKVSCGKSSMAAMDSEEVRLS) the chain is on the extracellular side. The helical transmembrane segment at 175 to 200 (LQAQSQILGWCLICSASFFSLLTTCY) threads the bilayer. The Cytoplasmic segment spans residues 201–309 (ARCRSKVSYL…MILVGTAQSL (109 aa)). An a 1,2-diacyl-sn-glycero-3-phosphate-binding site is contributed by R202.

The protein belongs to the CALHM family. As to quaternary structure, oligomerizes to form undecameric cone-shaped channels.

It localises to the membrane. Its function is as follows. May assemble to form large pore channels with gating and ion conductance likely regulated by membrane lipids. This is Calcium homeostasis modulator protein 5 from Rattus norvegicus (Rat).